Reading from the N-terminus, the 282-residue chain is MAYLAPISSSLSIFKNPQLSRFQFSSSSPNPLFLRPRIQILSMTMNKSPSLVVVAATTAAEKQKKRYPGESKGFVEEMRFVAMRLHTKDQAKEGEKETKSIEERPVAKWEPTVEGYLRFLVDSKLVYDTLELIIQDSNFPTYAEFKNTGLERAEKLSTDLEWFKEQGYEIPEPTAPGKTYSQYLKELAEKDPQAFICHFYNIYFAHSAGGRMIGRKVAERILDNKELEFYKWDGELSQLLQNVREKLNKVAEEWTREEKNHCLEETEKSFKYSGEILRLILS.

The N-terminal 54 residues, 1–54 (MAYLAPISSSLSIFKNPQLSRFQFSSSSPNPLFLRPRIQILSMTMNKSPSLVVV), are a transit peptide targeting the chloroplast. A heme b-binding site is contributed by His86.

Belongs to the heme oxygenase family. In terms of tissue distribution, widely expressed.

It is found in the plastid. The protein localises to the chloroplast. It carries out the reaction heme b + 3 reduced [NADPH--hemoprotein reductase] + 3 O2 = biliverdin IXalpha + CO + Fe(2+) + 3 oxidized [NADPH--hemoprotein reductase] + 3 H2O + H(+). With respect to regulation, activated by ascorbate. Functionally, key enzyme in the synthesis of the chromophore of the phytochrome family of plant photoreceptors. Catalyzes the opening of the heme ring to form the open-chain tetrapyrrole biliverdin IX with the release of iron and carbon monoxide (CO). Produces specifically the biliverdin IX-alpha isomer. Can form complex with heme, is ferredoxin-dependent and its activity is increased in the presence of ascorbate. Plays a role in salt acclimation signaling. May affect the plastid-to-nucleus signaling pathway by perturbing tetrapyrrole synthesis. The plastid-to-nucleus signal plays an important role in the coordinated expression of both nuclear- and chloroplast-localized genes that encode photosynthesis-related proteins. The polypeptide is Heme oxygenase 1, chloroplastic (HO1) (Arabidopsis thaliana (Mouse-ear cress)).